The following is a 112-amino-acid chain: Large ribosomal subunit protein eL30 (112 aa).

It belongs to the eukaryotic ribosomal protein eL30 family. Expressed in roots and leaves.

The protein is Large ribosomal subunit protein eL30 of Triticum aestivum (Wheat).